Reading from the N-terminus, the 420-residue chain is UDP-glucuronic acid decarboxylase 1 (420 aa).

Residue M1 is modified to N-acetylmethionine. The Cytoplasmic segment spans residues 1–19; that stretch reads MVSKALLRLVSAVNRRRMK. A helical; Signal-anchor for type II membrane protein transmembrane segment spans residues 20–40; it reads LLLGIALLAYVASVWGNFVNM. Topologically, residues 41 to 420 are lumenal; it reads RSIQENGELK…RIKKGRTRHN (380 aa). T94 bears the Phosphothreonine mark. NAD(+) is bound by residues G98, F99, V100, D119, N120, F122, T123, G124, D144, and V145. 2 residues coordinate UDP-alpha-D-glucuronate: L149 and Y150. Positions 159 and 161 each coordinate NAD(+). K177 serves as a coordination point for UDP-alpha-D-glucuronate. Residue T178 participates in NAD(+) binding. N185, G188, K191, and R192 together coordinate UDP-alpha-D-glucuronate. 3 residues coordinate NAD(+): A200, Y231, and K235. Y231 acts as the Proton acceptor in catalysis. UDP-alpha-D-glucuronate-binding residues include Y245, Q248, and E249. Residues T261, H267, and R272 each coordinate NAD(+). N316 is a glycosylation site (N-linked (GlcNAc...) asparagine).

This sequence belongs to the NAD(P)-dependent epimerase/dehydratase family. UDP-glucuronic acid decarboxylase subfamily. Homodimer and homotetramer. Interacts with AKT1. NAD(+) is required as a cofactor.

Its subcellular location is the golgi apparatus. The protein resides in the golgi stack membrane. The enzyme catalyses UDP-alpha-D-glucuronate + H(+) = UDP-alpha-D-xylose + CO2. Its pathway is nucleotide-sugar biosynthesis; UDP-alpha-D-xylose biosynthesis; UDP-alpha-D-xylose from UDP-alpha-D-glucuronate: step 1/1. In terms of biological role, catalyzes the NAD-dependent decarboxylation of UDP-glucuronic acid to UDP-xylose. Necessary for the biosynthesis of the core tetrasaccharide in glycosaminoglycan biosynthesis. The chain is UDP-glucuronic acid decarboxylase 1 (UXS1) from Pongo abelii (Sumatran orangutan).